The chain runs to 301 residues: Multifunctional dioxygenase prhA (301 aa).

Positions 130, 132, and 214 each coordinate Fe cation.

Belongs to the PhyH family. Homodimer. Fe cation is required as a cofactor.

The catalysed reaction is preaustinoid A1 + 2-oxoglutarate + O2 = berkeleyone B + succinate + CO2 + H2O. It catalyses the reaction berkeleyone B + 2-oxoglutarate + O2 = berkeleydione + succinate + CO2 + H2O. It carries out the reaction preaustinoid A + 2 2-oxoglutarate + 2 O2 = berkeleytrione + 2 succinate + 2 CO2 + H2O. The protein operates within secondary metabolite biosynthesis; terpenoid biosynthesis. In terms of biological role, multifunctional dioxygenase; part of the gene cluster that mediates the biosynthesis of paraherquonin, a meroterpenoid with a unique, highly congested hexacyclic molecular architecture. The first step of the pathway is the synthesis of 3,5-dimethylorsellinic acid (DMOA) by the polyketide synthase prhL. Synthesis of DMOA is followed by farnesylation by the prenyltransferase prhE, methylesterification by the methyl-transferase prhM, epoxidation of the prenyl chain by the flavin-dependent monooxygenase prhF, and cyclization of the farnesyl moiety by the terpene cyclase prhH, to yield the tetracyclic intermediate, protoaustinoid A. The short chain dehydrogenase prhI then oxidizes the C-3 alcohol group of the terpene cyclase product to transform protoaustinoid A into protoaustinoid B. The FAD-binding monooxygenase prhJ catalyzes the oxidation of protoaustinoid B into preaustinoid A which is further oxidized into preaustinoid A1 by FAD-binding monooxygenase phrK. Finally, prhA leads to berkeleydione via the berkeleyone B intermediate. PrhA is a multifunctional dioxygenase that first desaturates at C5-C6 to form berkeleyone B, followed by rearrangement of the A/B-ring to form the cycloheptadiene moiety in berkeleydione. Berkeleydione serves as the key intermediate for the biosynthesis of paraherquonin as well as many other meroterpenoids. The cytochrome P450 monooxygenases prhB, prhD, and prhN, as well as the isomerase prhC, are probably involved in the late stage of paraherquonin biosynthesis, after the production of berkeleydione. Especially prhC might be a multifunctional enzyme that catalyzes the D-ring expansion via intramolecular methoxy rearrangement, as well as the hydrolysis of the expanded D-ring. This chain is Multifunctional dioxygenase prhA, found in Penicillium brasilianum.